A 117-amino-acid chain; its full sequence is Protein SMALL AUXIN UP-REGULATED RNA 54 (117 aa).

This sequence belongs to the ARG7 family. As to expression, expressed in trichomes. Hardly observed in leaves.

It localises to the cell membrane. Functionally, provide a mechanistic link between auxin and plasma membrane H(+)-ATPases (PM H(+)-ATPases, e.g. AHA1 and AHA2), and triggers PM H(+)-ATPases activity by promoting phosphorylation of their C-terminal autoinhibitory domain as a result of PP2C-D subfamily of type 2C phosphatases inhibition, thus leading to the acidification of the apoplast and the facilitation of solutes and water uptake to drive cell expansion. Triggers plant growth probably by promoting cell elongation. Regulates branch angles and bending. This is Protein SMALL AUXIN UP-REGULATED RNA 54 from Arabidopsis thaliana (Mouse-ear cress).